The primary structure comprises 251 residues: Indole-3-glycerol phosphate synthase (251 aa).

The segment covering 1-12 has biased composition (polar residues); that stretch reads MDDSSSLASPVQ. The interval 1 to 27 is disordered; the sequence is MDDSSSLASPVQSILAAARRRDPPTRR.

This sequence belongs to the TrpC family.

The catalysed reaction is 1-(2-carboxyphenylamino)-1-deoxy-D-ribulose 5-phosphate + H(+) = (1S,2R)-1-C-(indol-3-yl)glycerol 3-phosphate + CO2 + H2O. Its pathway is amino-acid biosynthesis; L-tryptophan biosynthesis; L-tryptophan from chorismate: step 4/5. This is Indole-3-glycerol phosphate synthase from Halobacterium salinarum (strain ATCC 700922 / JCM 11081 / NRC-1) (Halobacterium halobium).